The following is a 259-amino-acid chain: MTFPNINPIIFSIGPLAISWYSLSYVIGILLGWFYANKIVEKFKPQITKKNLEDFITYAVIGIIVGGRLGFVLLYNPSRYFSNPIDILKTYEGGMSFHGGALGGIIAAYLFCRKYKINFLSLTDIIAPVVPIGLFLGRIANFINGELYGRITNSSFGMIFPNSDLMPRHPSQLYEAFFEGLVLFSILAYTTFKHKTLKKCGLNSGIFFTFYGLFRITIEIFREPDIQIGFILDSLTMGQILSVPMLLLGSYLICQSNPK.

4 consecutive transmembrane segments (helical) span residues Ile9–Ile29, Phe55–Tyr75, Glu92–Cys112, and Ile117–Gly137. Arg138 is a binding site for a 1,2-diacyl-sn-glycero-3-phospho-(1'-sn-glycerol). 3 helical membrane-spanning segments follow: residues Gln172–Phe192, Gly201–Phe221, and Ile228–Leu248.

Belongs to the Lgt family.

It is found in the cell inner membrane. The enzyme catalyses L-cysteinyl-[prolipoprotein] + a 1,2-diacyl-sn-glycero-3-phospho-(1'-sn-glycerol) = an S-1,2-diacyl-sn-glyceryl-L-cysteinyl-[prolipoprotein] + sn-glycerol 1-phosphate + H(+). The protein operates within protein modification; lipoprotein biosynthesis (diacylglyceryl transfer). Catalyzes the transfer of the diacylglyceryl group from phosphatidylglycerol to the sulfhydryl group of the N-terminal cysteine of a prolipoprotein, the first step in the formation of mature lipoproteins. The sequence is that of Phosphatidylglycerol--prolipoprotein diacylglyceryl transferase from Rickettsia conorii (strain ATCC VR-613 / Malish 7).